The primary structure comprises 450 residues: MKVIDQFKNKKVLVLGLAKSGESAARLLDKLGAIVTVNDGKPFEDNPAAQCLLEEGIKVITGGHPLELLDEEFALMVKNPGIPYSNPMIEKALAKGIPVLTEVELAYLISEAPIIGITGSNGKTTTTTMIGEVLTAAGQHGLLSGNIGYPASQVAQIASDKDTLVMELSSFQLMGVQEFHPEIAVITNLMPTHIDYHGLFEEYVAAKWNIQNKMTAADFLVLNFNQDLVKDLASKTEATVVPFSTLEKVDGAYLEDGQLYFRGEVVMAANEIGVPGSHNVENALATIAVAKLRDVDNQTIKETLSAFGGVKHRLQFVDDIKGVKFYNDSKSTNILATQKALSGFDNSKVVLIAGGLDRGNEFDELVPDITGLKKMVILGQSAERVKRAADKAGVAYVEATDIADATRKAYELATQGDVVLLSPANASWDMYANFEVRGDLFIDTVAELKE.

119-125 (GSNGKTT) provides a ligand contact to ATP.

Belongs to the MurCDEF family.

The protein resides in the cytoplasm. The enzyme catalyses UDP-N-acetyl-alpha-D-muramoyl-L-alanine + D-glutamate + ATP = UDP-N-acetyl-alpha-D-muramoyl-L-alanyl-D-glutamate + ADP + phosphate + H(+). The protein operates within cell wall biogenesis; peptidoglycan biosynthesis. In terms of biological role, cell wall formation. Catalyzes the addition of glutamate to the nucleotide precursor UDP-N-acetylmuramoyl-L-alanine (UMA). The polypeptide is UDP-N-acetylmuramoylalanine--D-glutamate ligase (Streptococcus pneumoniae (strain JJA)).